The following is a 247-amino-acid chain: Caffeoyl-CoA O-methyltransferase 1 (247 aa).

A substrate-binding site is contributed by Lys21. Residues Thr63, Glu85, 87 to 88 (GV), Ser93, Asp111, and Ala140 contribute to the S-adenosyl-L-methionine site. A substrate-binding site is contributed by Asp163. Residue Asp163 participates in a divalent metal cation binding. Asp165 provides a ligand contact to S-adenosyl-L-methionine. A divalent metal cation contacts are provided by Asp189 and Asn190. Asn194 lines the substrate pocket.

This sequence belongs to the class I-like SAM-binding methyltransferase superfamily. Cation-dependent O-methyltransferase family. CCoAMT subfamily. A divalent metal cation serves as cofactor.

The enzyme catalyses (E)-caffeoyl-CoA + S-adenosyl-L-methionine = (E)-feruloyl-CoA + S-adenosyl-L-homocysteine + H(+). It participates in aromatic compound metabolism; phenylpropanoid biosynthesis. Its function is as follows. Methylates caffeoyl-CoA to feruloyl-CoA and 5-hydroxyferuloyl-CoA to sinapoyl-CoA. Plays a role in the synthesis of feruloylated polysaccharides. Involved in the reinforcement of the plant cell wall. Also involved in the responding to wounding or pathogen challenge by the increased formation of cell wall-bound ferulic acid polymers. The protein is Caffeoyl-CoA O-methyltransferase 1 (CCOAOMT1) of Populus trichocarpa (Western balsam poplar).